Reading from the N-terminus, the 244-residue chain is Phosphoribosylaminoimidazole-succinocarboxamide synthase (244 aa).

This sequence belongs to the SAICAR synthetase family.

The enzyme catalyses 5-amino-1-(5-phospho-D-ribosyl)imidazole-4-carboxylate + L-aspartate + ATP = (2S)-2-[5-amino-1-(5-phospho-beta-D-ribosyl)imidazole-4-carboxamido]succinate + ADP + phosphate + 2 H(+). It functions in the pathway purine metabolism; IMP biosynthesis via de novo pathway; 5-amino-1-(5-phospho-D-ribosyl)imidazole-4-carboxamide from 5-amino-1-(5-phospho-D-ribosyl)imidazole-4-carboxylate: step 1/2. The protein is Phosphoribosylaminoimidazole-succinocarboxamide synthase of Prochlorococcus marinus (strain SARG / CCMP1375 / SS120).